A 157-amino-acid polypeptide reads, in one-letter code: Ribosome maturation factor RimP (157 aa).

Belongs to the RimP family.

The protein localises to the cytoplasm. Functionally, required for maturation of 30S ribosomal subunits. The protein is Ribosome maturation factor RimP of Lactococcus lactis subsp. lactis (strain IL1403) (Streptococcus lactis).